Consider the following 145-residue polypeptide: MAEVEQKKKRTFRKFTYRGVDLDQLLDMSYEQLMQLYSARQRRRLNRGLRRKQHSLLKRLRKAKKEAPPMEKPEVVKTHLRDMIILPEMVGSMVGVYNGKTFNQVEIKPEMIGHYLGEFSITYKPVKHGRPGIGATHSSRFIPLK.

The residue at position 2 (alanine 2) is an N-acetylalanine. Residue lysine 108 forms a Glycyl lysine isopeptide (Lys-Gly) (interchain with G-Cter in SUMO2) linkage.

Belongs to the universal ribosomal protein uS19 family. In terms of assembly, component of the small ribosomal subunit.

It localises to the cytoplasm. Its function is as follows. Component of the small ribosomal subunit. The ribosome is a large ribonucleoprotein complex responsible for the synthesis of proteins in the cell. This Mesocricetus auratus (Golden hamster) protein is Small ribosomal subunit protein uS19 (RPS15).